The chain runs to 447 residues: Trigger factor (447 aa).

Positions 164 to 249 (GNQVTFDFEG…VKLVEKSKLP (86 aa)) constitute a PPIase FKBP-type domain.

This sequence belongs to the FKBP-type PPIase family. Tig subfamily.

It localises to the cytoplasm. It catalyses the reaction [protein]-peptidylproline (omega=180) = [protein]-peptidylproline (omega=0). Functionally, involved in protein export. Acts as a chaperone by maintaining the newly synthesized protein in an open conformation. Functions as a peptidyl-prolyl cis-trans isomerase. This Psychrobacter cryohalolentis (strain ATCC BAA-1226 / DSM 17306 / VKM B-2378 / K5) protein is Trigger factor.